A 392-amino-acid chain; its full sequence is UPF0229 protein CPF_1540 (392 aa).

A disordered region spans residues V75–K100. Residues G80 to K94 are compositionally biased toward basic and acidic residues.

It belongs to the UPF0229 family.

In Clostridium perfringens (strain ATCC 13124 / DSM 756 / JCM 1290 / NCIMB 6125 / NCTC 8237 / Type A), this protein is UPF0229 protein CPF_1540.